The following is a 362-amino-acid chain: C-C chemokine receptor type 10 (362 aa).

At 1 to 48 (MGTKPTEQVSWGLYSGYDEEAYSVGPLPELCYKADVQAFSRAFQPSVS) the chain is on the extracellular side. The chain crosses the membrane as a helical span at residues 49–69 (LMVAVLGLAGNGLVLATHLAA). At 70-80 (RRTTRSPTSVH) the chain is on the cytoplasmic side. A helical transmembrane segment spans residues 81 to 101 (LLQLALADLLLALTLPFAAAG). Topologically, residues 102–115 (ALQGWNLGSTTCRA) are extracellular. Residues C113 and C191 are joined by a disulfide bond. Residues 116-136 (ISGLYSASFHAGFLFLACISA) traverse the membrane as a helical segment. Residues 137 to 159 (DRYVAIARALPAGQRPSTPSRAH) lie on the Cytoplasmic side of the membrane. The helical transmembrane segment at 160 to 180 (LVSVFVWLLSLFLALPALLFS) threads the bilayer. Topologically, residues 181 to 208 (RDGPREGQRRCRLIFPESLTQTVKGASA) are extracellular. The chain crosses the membrane as a helical span at residues 209 to 229 (VAQVVLGFALPLGVMAACYAL). Residues 230-247 (LGRTLLAARGPERRRALR) are Cytoplasmic-facing. A helical membrane pass occupies residues 248–268 (VVVALVVAFVVLQLPYSLALL). Residues 269-291 (LDTADLLAARERSCSSSKRKDLA) are Extracellular-facing. A helical transmembrane segment spans residues 292–312 (LLVTGGLTLVRCSLNPVLYAF). The Cytoplasmic portion of the chain corresponds to 313–362 (LGLRFRRDLRRLLQGGGCSPKPNPRGRCPRRLRLSSCSAPTETHSLSWDN).

The protein belongs to the G-protein coupled receptor 1 family. Expressed at high levels in small intestine, colon, lymph nodes, Peyer patches and at lower levels in thymus, lung and spleen.

The protein resides in the cell membrane. Functionally, receptor for chemokines SCYA27 and SCYA28. Subsequently transduces a signal by increasing the intracellular calcium ions level. The polypeptide is C-C chemokine receptor type 10 (Ccr10) (Mus musculus (Mouse)).